We begin with the raw amino-acid sequence, 179 residues long: UPF0316 protein Ping_1367 (179 aa).

2 helical membrane-spanning segments follow: residues 28-48 (FLASFIGFFEIIIWLVASAQV) and 55-75 (WYLALAYASGFSVGNYAGISI).

This sequence belongs to the UPF0316 family.

The protein localises to the cell membrane. This Psychromonas ingrahamii (strain DSM 17664 / CCUG 51855 / 37) protein is UPF0316 protein Ping_1367.